The following is an 818-amino-acid chain: Glycogen phosphorylase (818 aa).

Lys-667 is modified (N6-(pyridoxal phosphate)lysine).

Belongs to the glycogen phosphorylase family. It depends on pyridoxal 5'-phosphate as a cofactor.

The enzyme catalyses [(1-&gt;4)-alpha-D-glucosyl](n) + phosphate = [(1-&gt;4)-alpha-D-glucosyl](n-1) + alpha-D-glucose 1-phosphate. Functionally, phosphorylase is an important allosteric enzyme in carbohydrate metabolism. Enzymes from different sources differ in their regulatory mechanisms and in their natural substrates. However, all known phosphorylases share catalytic and structural properties. In Pasteurella multocida (strain Pm70), this protein is Glycogen phosphorylase (glgP).